Reading from the N-terminus, the 264-residue chain is Phosphonoacetaldehyde hydrolase (264 aa).

The Nucleophile role is filled by Asp-9. Asp-9 and Ala-11 together coordinate Mg(2+). Lys-50 (schiff-base intermediate with substrate) is an active-site residue. Asp-183 contacts Mg(2+).

It belongs to the HAD-like hydrolase superfamily. PhnX family. In terms of assembly, homodimer. Requires Mg(2+) as cofactor.

It catalyses the reaction phosphonoacetaldehyde + H2O = acetaldehyde + phosphate + H(+). Its function is as follows. Involved in phosphonate degradation. The sequence is that of Phosphonoacetaldehyde hydrolase from Bacillus cereus (strain ZK / E33L).